The primary structure comprises 252 residues: tRNA (guanine-N(7)-)-methyltransferase (252 aa).

Residues glutamate 51, aspartate 76, asparagine 103, and aspartate 125 each contribute to the S-adenosyl-L-methionine site. The active site involves aspartate 125. Substrate contacts are provided by residues lysine 129, aspartate 159, and 199–202 (TYYE).

Belongs to the class I-like SAM-binding methyltransferase superfamily. TrmB family.

It catalyses the reaction guanosine(46) in tRNA + S-adenosyl-L-methionine = N(7)-methylguanosine(46) in tRNA + S-adenosyl-L-homocysteine. The protein operates within tRNA modification; N(7)-methylguanine-tRNA biosynthesis. Its function is as follows. Catalyzes the formation of N(7)-methylguanine at position 46 (m7G46) in tRNA. The chain is tRNA (guanine-N(7)-)-methyltransferase from Bacteroides fragilis (strain YCH46).